We begin with the raw amino-acid sequence, 1020 residues long: Retinoblastoma-related protein (1020 aa).

Polar residues-rich tracts occupy residues 382 to 391 and 398 to 409; these read SPTKTITSPL and ASHTNGILGSTN. The tract at residues 382-409 is disordered; it reads SPTKTITSPLSPHRSPASHTNGILGSTN. A domain A region spans residues 415–616; the sequence is TPVSTAMTTA…EKGSSMYNSL (202 aa). Positions 415–869 are pocket; that stretch reads TPVSTAMTTA…NEIFIPAAKP (455 aa). The tract at residues 617-737 is spacer; sequence TVARPSLSAE…PGGGGETCAE (121 aa). The tract at residues 738-869 is domain B; sequence TGINIFFSKI…NEIFIPAAKP (132 aa).

It belongs to the retinoblastoma protein (RB) family.

Its subcellular location is the nucleus. Functionally, regulator of biological processes that recruits a histone deacetylase to control gene transcription. May play a role in the entry into mitosis, negatively regulating the cell proliferation. Formation of stable complexes with geminiviridae replication-associated proteins may create a cellular environment which favors viral DNA replication. This Ricinus communis (Castor bean) protein is Retinoblastoma-related protein (RBR).